A 418-amino-acid polypeptide reads, in one-letter code: L-rhamnose isomerase (418 aa).

H262, D294, and D296 together coordinate Mn(2+).

Belongs to the rhamnose isomerase family. As to quaternary structure, homotetramer. It depends on Mn(2+) as a cofactor.

Its subcellular location is the cytoplasm. It catalyses the reaction L-rhamnopyranose = L-rhamnulose. The protein operates within carbohydrate degradation; L-rhamnose degradation; glycerone phosphate from L-rhamnose: step 1/3. In terms of biological role, catalyzes the interconversion of L-rhamnose and L-rhamnulose. The protein is L-rhamnose isomerase of Yersinia pestis bv. Antiqua (strain Antiqua).